The sequence spans 454 residues: Protein translocase subunit SecY (454 aa).

10 helical membrane passes run 43 to 63 (LTIA…LPYI), 97 to 117 (FTLG…AFVI), 144 to 164 (TLLL…AFIF), 168 to 188 (ILKL…ILWI), 201 to 221 (SSFL…GMSF), 226 to 246 (IFSF…WAAI), 289 to 309 (PVVF…YILL), 334 to 354 (IVEA…IIDP), 390 to 410 (LIGA…GFVF), and 414 to 434 (IFKG…TEIL).

This sequence belongs to the SecY/SEC61-alpha family. As to quaternary structure, component of the plastid Sec protein translocase complex, which is composed of at least SecY and SecE.

It localises to the plastid. Its subcellular location is the chloroplast thylakoid membrane. In terms of biological role, the central subunit of the protein translocation channel SecYE. Consists of two halves formed by TMs 1-5 and 6-10. These two domains form a lateral gate at the front which open onto the bilayer between TMs 2 and 7, and are clamped together by SecE at the back. The channel is closed by both a pore ring composed of hydrophobic SecY resides and a short helix (helix 2A) on the extracellular side of the membrane which forms a plug. The sequence is that of Protein translocase subunit SecY from Heterosigma akashiwo (strain NIES-293 / 8280G21-1).